Here is a 684-residue protein sequence, read N- to C-terminus: Divalent metal transporter 1 (684 aa).

Over Met1–Lys228 the chain is Cytoplasmic. The disordered stretch occupies residues Asn153 to Lys195. Positions Asn156–Val191 are enriched in low complexity. Residues Leu229–Leu247 form a helical membrane-spanning segment. The Vacuolar portion of the chain corresponds to Asp248 to Tyr275. The helical transmembrane segment at Tyr276–Gly299 threads the bilayer. At His300 to Ser319 the chain is on the cytoplasmic side. The chain crosses the membrane as a helical span at residues Thr320–Leu345. Residues Asn346–Gly350 lie on the Vacuolar side of the membrane. A helical membrane pass occupies residues Ile351–Leu370. Residues Glu371 to Val381 are Cytoplasmic-facing. The helical transmembrane segment at Leu382–Phe404 threads the bilayer. Residues Lys405–Asp423 lie on the Vacuolar side of the membrane. Residues Ala424 to Ala445 form a helical membrane-spanning segment. Residues Lys446 to Thr465 are Cytoplasmic-facing. Residues Ile466 to Ala487 form a helical membrane-spanning segment. Over Glu488–Lys515 the chain is Vacuolar. Residues Ile516 to Phe534 form a helical membrane-spanning segment. At Met535–Thr554 the chain is on the cytoplasmic side. A helical transmembrane segment spans residues Phe555 to Leu573. Residues Thr574–Thr584 are Vacuolar-facing. Residues Asn585 to Tyr603 form a helical membrane-spanning segment. Residues Arg604–Lys622 lie on the Cytoplasmic side of the membrane. A helical membrane pass occupies residues Phe623–Val645. The Vacuolar segment spans residues His646 to Ser650. A helical transmembrane segment spans residues Leu651–Asn673. The Cytoplasmic segment spans residues Ile674–Asn684.

The protein belongs to the NRAMP (TC 2.A.55) family.

Its subcellular location is the vacuole membrane. It carries out the reaction Fe(2+)(in) = Fe(2+)(out). Iron transporter. Required for parasite development during the blood stages. Required for apicoplast biogenesis. Required for mitochondrial polarization. The chain is Divalent metal transporter 1 from Plasmodium falciparum (isolate 3D7).